The chain runs to 178 residues: Probetacellulin (178 aa).

The signal sequence occupies residues 1–31 (MDRAARCSGASSLPLLLALALGLVILHCVVA). Residues 32 to 118 (DGNSTRSPET…LFYLRGDRGQ (87 aa)) are Extracellular-facing. The N-linked (GlcNAc...) asparagine glycan is linked to Asn-34. An EGF-like domain is found at 65-105 (HFSRCPKQYKHYCIKGRCRFVVAEQTPSCVCDEGYIGARCE). 3 disulfides stabilise this stretch: Cys-69–Cys-82, Cys-77–Cys-93, and Cys-95–Cys-104. A propeptide spans 112-178 (LRGDRGQILV…NEDIEETNIA (67 aa)) (removed in mature form). A helical transmembrane segment spans residues 119 to 139 (ILVICLIAVMVVFIILVIGVC). Residues 140-178 (TCCHPLRKRRKRKKKEEEMETLGKDITPINEDIEETNIA) lie on the Cytoplasmic side of the membrane.

Monomer. Interacts with EGFR and ERBB4. Synthesized in several tissues and tumor cells. Predominantly expressed in pancreas and small intestine.

Its subcellular location is the secreted. The protein localises to the extracellular space. It localises to the cell membrane. Functionally, growth factor that binds to EGFR, ERBB4 and other EGF receptor family members. Potent mitogen for retinal pigment epithelial cells and vascular smooth muscle cells. The polypeptide is Probetacellulin (BTC) (Homo sapiens (Human)).